A 226-amino-acid polypeptide reads, in one-letter code: V-type proton ATPase subunit E (226 aa).

Belongs to the V-ATPase E subunit family. As to quaternary structure, V-ATPase is a heteromultimeric enzyme composed of a peripheral catalytic V1 complex (components A to H) attached to an integral membrane V0 proton pore complex (components: a, c, c', c'', d, e, f and VOA1).

Its subcellular location is the vacuole membrane. Its function is as follows. Subunit of the V1 complex of vacuolar(H+)-ATPase (V-ATPase), a multisubunit enzyme composed of a peripheral complex (V1) that hydrolyzes ATP and a membrane integral complex (V0) that translocates protons. V-ATPase is responsible for acidifying and maintaining the pH of intracellular compartments. In Candida albicans (Yeast), this protein is V-type proton ATPase subunit E (VMA4).